The following is a 513-amino-acid chain: ATP synthase subunit alpha (513 aa).

Residue G169–T176 coordinates ATP.

Belongs to the ATPase alpha/beta chains family. In terms of assembly, F-type ATPases have 2 components, CF(1) - the catalytic core - and CF(0) - the membrane proton channel. CF(1) has five subunits: alpha(3), beta(3), gamma(1), delta(1), epsilon(1). CF(0) has three main subunits: a(1), b(2) and c(9-12). The alpha and beta chains form an alternating ring which encloses part of the gamma chain. CF(1) is attached to CF(0) by a central stalk formed by the gamma and epsilon chains, while a peripheral stalk is formed by the delta and b chains.

It localises to the cell inner membrane. The catalysed reaction is ATP + H2O + 4 H(+)(in) = ADP + phosphate + 5 H(+)(out). Its function is as follows. Produces ATP from ADP in the presence of a proton gradient across the membrane. The alpha chain is a regulatory subunit. The protein is ATP synthase subunit alpha of Shewanella putrefaciens (strain CN-32 / ATCC BAA-453).